The sequence spans 328 residues: uncharacterized protein (328 aa).

One can recognise a G-patch domain in the interval 10–55; the sequence is KMGFGHAMLLKMGWKGKGLGVEEDGRTEIIVNKKKQDKVGVGASIS. The segment at 97–291 is disordered; sequence EKITFKRTIK…KKSFSVSKTR (195 aa). Basic residues predominate over residues 101-110; sequence FKRTIKKNSK. The span at 116-126 shows a compositional bias: acidic residues; that stretch reads SDSDSDSDSES. Low complexity-rich tracts occupy residues 141–158 and 210–240; these read DSDS…SSSS and SSSS…SSSE. Basic residues predominate over residues 248–257; it reads KNKNKNKNKK.

This is an uncharacterized protein from Dictyostelium discoideum (Social amoeba).